The sequence spans 2145 residues: Mediator of RNA polymerase II transcription subunit 12-like protein (2145 aa).

The disordered stretch occupies residues M1–K30. The residue at position 462 (T462) is a Phosphothreonine. Residues E1436–K1455 show a composition bias toward basic and acidic residues. Disordered regions lie at residues E1436–S1460, R1721–Q1802, and D2029–F2145. Residues T1768–S1777 are compositionally biased toward basic residues. Residues R2052–Q2069 are compositionally biased toward low complexity. The span at Q2070–P2079 shows a compositional bias: pro residues. A compositionally biased stretch (polar residues) spans T2089–Q2099. A compositionally biased stretch (low complexity) spans R2104–Q2124. Residues K2125 to V2136 show a composition bias toward polar residues.

The protein belongs to the Mediator complex subunit 12 family. As to quaternary structure, may be a component of the Mediator complex, which is known to be composed of MED1, MED4, MED6, MED7, MED8, MED9, MED10, MED11, MED12, MED13, MED13L, MED14, MED15, MED16, MED17, MED18, MED19, MED20, MED21, MED22, MED23, MED24, MED25, MED26, MED27, MED29, MED30, MED31, CCNC, CDK8 and CDC2L6/CDK11. The MED12, MED13, CCNC and CDK8 subunits form a distinct module termed the CDK8 module. Mediator containing the CDK8 module is less active than Mediator lacking this module in supporting transcriptional activation. Individual preparations of the Mediator complex lacking one or more distinct subunits have been variously termed ARC, CRSP, DRIP, PC2, SMCC and TRAP.

It localises to the nucleus. May be a component of the Mediator complex, a coactivator involved in the regulated transcription of nearly all RNA polymerase II-dependent genes. Mediator functions as a bridge to convey information from gene-specific regulatory proteins to the basal RNA polymerase II transcription machinery. Mediator is recruited to promoters by direct interactions with regulatory proteins and serves as a scaffold for the assembly of a functional preinitiation complex with RNA polymerase II and the general transcription factors. The chain is Mediator of RNA polymerase II transcription subunit 12-like protein (MED12L) from Homo sapiens (Human).